Here is a 447-residue protein sequence, read N- to C-terminus: Probable glycine dehydrogenase (decarboxylating) subunit 1 (447 aa).

The protein belongs to the GcvP family. N-terminal subunit subfamily. The glycine cleavage system is composed of four proteins: P, T, L and H. In this organism, the P 'protein' is a heterodimer of two subunits.

It catalyses the reaction N(6)-[(R)-lipoyl]-L-lysyl-[glycine-cleavage complex H protein] + glycine + H(+) = N(6)-[(R)-S(8)-aminomethyldihydrolipoyl]-L-lysyl-[glycine-cleavage complex H protein] + CO2. In terms of biological role, the glycine cleavage system catalyzes the degradation of glycine. The P protein binds the alpha-amino group of glycine through its pyridoxal phosphate cofactor; CO(2) is released and the remaining methylamine moiety is then transferred to the lipoamide cofactor of the H protein. This is Probable glycine dehydrogenase (decarboxylating) subunit 1 from Bacillus cereus (strain AH187).